The following is a 405-amino-acid chain: Bone morphogenetic protein 4 (405 aa).

Residues 1-19 form the signal peptide; the sequence is MIPGNRMLMVILLCQVLLG. A propeptide spanning residues 20–291 is cleaved from the precursor; the sequence is GTNHASLIPE…GHALTRRARR (272 aa). Residues Asn-144, Asn-208, Asn-347, and Asn-362 are each glycosylated (N-linked (GlcNAc...) asparagine). 3 disulfides stabilise this stretch: Cys-305-Cys-370, Cys-334-Cys-402, and Cys-338-Cys-404.

It belongs to the TGF-beta family. Homodimer; disulfide-linked. Part of a complex consisting of TWSG1 and CHRD. Forms a ternary complex with chordin/CHRD and TSKU.

It is found in the secreted. In terms of biological role, negatively regulates the structure and function of the limb apical ectodermal ridge. The protein is Bone morphogenetic protein 4 (BMP4) of Gallus gallus (Chicken).